The following is a 195-amino-acid chain: dITP/XTP pyrophosphatase (195 aa).

7–12 (SSNKGK) lines the substrate pocket. Residues Glu38 and Asp68 each coordinate Mg(2+). Residue Asp68 is the Proton acceptor of the active site. Substrate contacts are provided by residues Ser69, 150-153 (FGYD), Lys173, and 178-179 (HR).

This sequence belongs to the HAM1 NTPase family. In terms of assembly, homodimer. Mg(2+) serves as cofactor.

It carries out the reaction XTP + H2O = XMP + diphosphate + H(+). The enzyme catalyses dITP + H2O = dIMP + diphosphate + H(+). It catalyses the reaction ITP + H2O = IMP + diphosphate + H(+). In terms of biological role, pyrophosphatase that catalyzes the hydrolysis of nucleoside triphosphates to their monophosphate derivatives, with a high preference for the non-canonical purine nucleotides XTP (xanthosine triphosphate), dITP (deoxyinosine triphosphate) and ITP. Seems to function as a house-cleaning enzyme that removes non-canonical purine nucleotides from the nucleotide pool, thus preventing their incorporation into DNA/RNA and avoiding chromosomal lesions. This is dITP/XTP pyrophosphatase from Nautilia profundicola (strain ATCC BAA-1463 / DSM 18972 / AmH).